Consider the following 512-residue polypeptide: Methionine--tRNA ligase (512 aa).

The 'HIGH' region motif lies at 11-21 (YYASGKPHIGH). Residues Cys126, Cys129, Cys143, and His147 each contribute to the Zn(2+) site. Residues 301–305 (KMSKS) carry the 'KMSKS' region motif. Residue Lys304 participates in ATP binding.

This sequence belongs to the class-I aminoacyl-tRNA synthetase family. MetG type 2A subfamily. As to quaternary structure, monomer. Zn(2+) serves as cofactor.

Its subcellular location is the cytoplasm. It catalyses the reaction tRNA(Met) + L-methionine + ATP = L-methionyl-tRNA(Met) + AMP + diphosphate. Its function is as follows. Is required not only for elongation of protein synthesis but also for the initiation of all mRNA translation through initiator tRNA(fMet) aminoacylation. In Mycoplasma genitalium (strain ATCC 33530 / DSM 19775 / NCTC 10195 / G37) (Mycoplasmoides genitalium), this protein is Methionine--tRNA ligase (metG).